The chain runs to 550 residues: MFCVQCEQTIRTPAGNGCSYAQGMCGKTAETSDLQDLLIAALQGLSAWAVKAREYGIINHDVDSFAPRAFFSTLTNVNFDSPRIVGYAREAIALREALKAQCLAVDANARVDNPMANLQLVSDDLGELQRQAAEFTPNKDKAAIGENILGLRLLCLYGLKGAAAYMEHAHVLGQYDNDIYAQYHKIMAWLGTWPADMNALLECSMEIGQMNFKVMSILDAGETGKYGHPTPTQVNVKATAGKCILISGHDLKDLYNLLEQTEGTGVNVYTHGEMLPAHGYPELRKFKHLVGNYGSGWQNQQVEFARFPGPIVMTSNCIIDPTVGAYDDRIWTRSIVGWPGVRHLDGDDFSAVITQAQQMAGFPYSEIPHLITVGFGRQTLLGAADTLIDLVSREKLRHIFLLGGCDGARGERHYFTDFATSVPDDCLILTLACGKYRFNKLEFGDIEGLPRLVDAGQCNDAYSAIILAVTLAEKLGCGVNDLPLSMVLSWFEQKAIVILLTLLSLGVKNIVTGPTAPGFLTPDLLAVLNEKFGLRSITTVEEDMKQLLSA.

Cysteine 3, cysteine 6, cysteine 18, and cysteine 25 together coordinate [2Fe-2S] cluster. Hybrid [4Fe-2O-2S] cluster-binding residues include histidine 249, glutamate 273, cysteine 317, cysteine 405, cysteine 433, cysteine 458, glutamate 492, and lysine 494. Cysteine 405 carries the cysteine persulfide modification.

Belongs to the HCP family. [2Fe-2S] cluster is required as a cofactor. Requires hybrid [4Fe-2O-2S] cluster as cofactor.

The protein localises to the cytoplasm. It catalyses the reaction A + NH4(+) + H2O = hydroxylamine + AH2 + H(+). Functionally, catalyzes the reduction of hydroxylamine to form NH(3) and H(2)O. This is Hydroxylamine reductase from Escherichia coli (strain SE11).